Reading from the N-terminus, the 393-residue chain is Acetylornithine aminotransferase (393 aa).

Pyridoxal 5'-phosphate-binding positions include 105 to 106 and phenylalanine 138; that span reads GA. Residue arginine 141 coordinates N(2)-acetyl-L-ornithine. 224-227 lines the pyridoxal 5'-phosphate pocket; it reads DEVQ. Lysine 253 is modified (N6-(pyridoxal phosphate)lysine). Residue serine 281 participates in N(2)-acetyl-L-ornithine binding. Threonine 282 is a binding site for pyridoxal 5'-phosphate.

It belongs to the class-III pyridoxal-phosphate-dependent aminotransferase family. ArgD subfamily. In terms of assembly, homodimer. Requires pyridoxal 5'-phosphate as cofactor.

The protein localises to the cytoplasm. The enzyme catalyses N(2)-acetyl-L-ornithine + 2-oxoglutarate = N-acetyl-L-glutamate 5-semialdehyde + L-glutamate. Its pathway is amino-acid biosynthesis; L-arginine biosynthesis; N(2)-acetyl-L-ornithine from L-glutamate: step 4/4. The chain is Acetylornithine aminotransferase from Haemophilus ducreyi (strain 35000HP / ATCC 700724).